Consider the following 384-residue polypeptide: Cobalt-precorrin-5B C(1)-methyltransferase (384 aa).

Belongs to the CbiD family.

The enzyme catalyses Co-precorrin-5B + S-adenosyl-L-methionine = Co-precorrin-6A + S-adenosyl-L-homocysteine. Its pathway is cofactor biosynthesis; adenosylcobalamin biosynthesis; cob(II)yrinate a,c-diamide from sirohydrochlorin (anaerobic route): step 6/10. In terms of biological role, catalyzes the methylation of C-1 in cobalt-precorrin-5B to form cobalt-precorrin-6A. This Ruminiclostridium cellulolyticum (strain ATCC 35319 / DSM 5812 / JCM 6584 / H10) (Clostridium cellulolyticum) protein is Cobalt-precorrin-5B C(1)-methyltransferase.